Here is a 385-residue protein sequence, read N- to C-terminus: 8-amino-7-oxononanoate synthase (385 aa).

A substrate-binding site is contributed by R21. Pyridoxal 5'-phosphate is bound at residue 108–109; the sequence is GF. H133 lines the substrate pocket. Positions 179, 207, and 233 each coordinate pyridoxal 5'-phosphate. K236 bears the N6-(pyridoxal phosphate)lysine mark. T352 serves as a coordination point for substrate.

Belongs to the class-II pyridoxal-phosphate-dependent aminotransferase family. BioF subfamily. Homodimer. Pyridoxal 5'-phosphate is required as a cofactor.

It catalyses the reaction 6-carboxyhexanoyl-[ACP] + L-alanine + H(+) = (8S)-8-amino-7-oxononanoate + holo-[ACP] + CO2. It functions in the pathway cofactor biosynthesis; biotin biosynthesis. Functionally, catalyzes the decarboxylative condensation of pimeloyl-[acyl-carrier protein] and L-alanine to produce 8-amino-7-oxononanoate (AON), [acyl-carrier protein], and carbon dioxide. This Pseudescherichia vulneris (Escherichia vulneris) protein is 8-amino-7-oxononanoate synthase.